The primary structure comprises 95 residues: Large ribosomal subunit protein bL25 (95 aa).

It belongs to the bacterial ribosomal protein bL25 family. In terms of assembly, part of the 50S ribosomal subunit; part of the 5S rRNA/L5/L18/L25 subcomplex. Contacts the 5S rRNA. Binds to the 5S rRNA independently of L5 and L18.

In terms of biological role, this is one of the proteins that binds to the 5S RNA in the ribosome where it forms part of the central protuberance. The protein is Large ribosomal subunit protein bL25 of Shewanella baltica (strain OS223).